A 188-amino-acid polypeptide reads, in one-letter code: MPLKDCDQPPELSIPPTFWYRSLVAAGLYCPEVHGPARYWLTVEGSFTRALQQKCQERFHVEILREGFSTPTPEEAKRLNLAPRQLAWVREVRLCGDGRPWVLARTVIPQTCLHGHGRRLRNLGNKPLGAYLFSSPEWQRGPLETGLCKARSNGHPRLARRSLFHRGSCALLVGEYLLPRLYQSPNRG.

Arg90, Leu128, and Glu175 together coordinate substrate.

This sequence belongs to the UbiC family.

Its subcellular location is the cytoplasm. The catalysed reaction is chorismate = 4-hydroxybenzoate + pyruvate. The protein operates within cofactor biosynthesis; ubiquinone biosynthesis. In terms of biological role, removes the pyruvyl group from chorismate, with concomitant aromatization of the ring, to provide 4-hydroxybenzoate (4HB) for the ubiquinone pathway. This is Probable chorismate pyruvate-lyase from Marinobacter nauticus (strain ATCC 700491 / DSM 11845 / VT8) (Marinobacter aquaeolei).